The chain runs to 438 residues: Transmembrane protein 184C (438 aa).

7 helical membrane-spanning segments follow: residues 17–37 (LVAV…VWEL), 48–68 (AWFI…WVIL), 86–106 (ILWM…YPGI), 179–199 (YTVV…LGIY), 212–232 (YLVI…LLFY), 254–274 (VVFV…VGVI), and 287–307 (AVAT…AAIA). Positions 358–438 (PRKKLFPEDQ…KEPSDKSVDS (81 aa)) are disordered. Low complexity-rich tracts occupy residues 374-390 (SLLS…ASSM) and 404-413 (TVTPQTTPTT). A Phosphoserine modification is found at serine 422. A compositionally biased stretch (basic and acidic residues) spans 425–438 (IGEKKEPSDKSVDS).

Belongs to the TMEM184 family.

Its subcellular location is the membrane. Functionally, possible tumor suppressor which may play a role in cell growth. This Pongo abelii (Sumatran orangutan) protein is Transmembrane protein 184C (TMEM184C).